Here is a 518-residue protein sequence, read N- to C-terminus: Integrator complex subunit 14 (518 aa).

The 203-residue stretch at 2–204 (PTVVVMDVSL…KNVQSMFGKL (203 aa)) folds into the VWFA domain. Positions 10, 12, and 86 each coordinate Mg(2+). Positions 373–394 (SDAKENPYGDDDNKSPFPLQPK) are disordered. Positions 374-386 (DAKENPYGDDDNK) are enriched in basic and acidic residues.

This sequence belongs to the Integrator subunit 14 family. Component of the Integrator complex, composed of core subunits INTS1, INTS2, INTS3, INTS4, INTS5, INTS6, INTS7, INTS8, INTS9/RC74, INTS10, INTS11/CPSF3L, INTS12, INTS13, INTS14 and INTS15. The core complex associates with protein phosphatase 2A subunits PPP2CA and PPP2R1A, to form the Integrator-PP2A (INTAC) complex. INTS14 is part of the tail subcomplex, composed of INTS10, INTS13, INTS14 and INTS15.

It is found in the nucleus. In terms of biological role, component of the integrator complex, a multiprotein complex that terminates RNA polymerase II (Pol II) transcription in the promoter-proximal region of genes. The integrator complex provides a quality checkpoint during transcription elongation by driving premature transcription termination of transcripts that are unfavorably configured for transcriptional elongation: the complex terminates transcription by (1) catalyzing dephosphorylation of the C-terminal domain (CTD) of Pol II subunit POLR2A/RPB1 and SUPT5H/SPT5, (2) degrading the exiting nascent RNA transcript via endonuclease activity and (3) promoting the release of Pol II from bound DNA. The integrator complex is also involved in terminating the synthesis of non-coding Pol II transcripts, such as enhancer RNAs (eRNAs), small nuclear RNAs (snRNAs), telomerase RNAs and long non-coding RNAs (lncRNAs). Within the integrator complex, INTS14 is part of the integrator tail module that acts as a platform for the recruitment of transcription factors at promoters. In Gallus gallus (Chicken), this protein is Integrator complex subunit 14.